The chain runs to 881 residues: Probable intermembrane transport protein HI_1672 (881 aa).

A helical transmembrane segment spans residues 30-49 (FWLLPFIALCIGAILFFQIV).

Belongs to the PqiB family.

It is found in the cell inner membrane. The sequence is that of Probable intermembrane transport protein HI_1672 from Haemophilus influenzae (strain ATCC 51907 / DSM 11121 / KW20 / Rd).